The following is a 253-amino-acid chain: 5'/3'-nucleotidase SurE (253 aa).

Positions 8, 9, 39, and 92 each coordinate a divalent metal cation.

Belongs to the SurE nucleotidase family. The cofactor is a divalent metal cation.

The protein resides in the cytoplasm. It catalyses the reaction a ribonucleoside 5'-phosphate + H2O = a ribonucleoside + phosphate. The enzyme catalyses a ribonucleoside 3'-phosphate + H2O = a ribonucleoside + phosphate. The catalysed reaction is [phosphate](n) + H2O = [phosphate](n-1) + phosphate + H(+). In terms of biological role, nucleotidase with a broad substrate specificity as it can dephosphorylate various ribo- and deoxyribonucleoside 5'-monophosphates and ribonucleoside 3'-monophosphates with highest affinity to 3'-AMP. Also hydrolyzes polyphosphate (exopolyphosphatase activity) with the preference for short-chain-length substrates (P20-25). Might be involved in the regulation of dNTP and NTP pools, and in the turnover of 3'-mononucleotides produced by numerous intracellular RNases (T1, T2, and F) during the degradation of various RNAs. This chain is 5'/3'-nucleotidase SurE, found in Salmonella typhimurium (strain LT2 / SGSC1412 / ATCC 700720).